The chain runs to 543 residues: Serine/threonine-protein kinase Chk2 (543 aa).

Positions 1–66 are disordered; sequence MSRESDVEAQ…SGTLSSLETV (66 aa). Residues 8–22 show a composition bias toward polar residues; that stretch reads EAQQSHGSSACSQPH. A compositionally biased stretch (low complexity) spans 23-62; sequence GSVTQSQGSSSQSQGISSSSTSTMPNSSQSSHSSSGTLSS. S62 carries the post-translational modification Phosphoserine; by PLK3. T68 bears the Phosphothreonine; by ATM and MAP3K20 mark. Phosphoserine; by PLK3 is present on S73. The 63-residue stretch at 113–175 folds into the FHA domain; the sequence is YWFGRDKSCE…NGTFVNTELV (63 aa). One can recognise a Protein kinase domain in the interval 220–486; sequence YIMSKTLGSG…TEEALRHPWL (267 aa). ATP-binding positions include 227–234, K249, and 302–308; these read GSGACGEV and ELMEGGE. Catalysis depends on D347, which acts as the Proton acceptor. Residues 351–352 and D368 each bind ATP; that span reads EN. A T-loop/activation segment region spans residues 368–394; the sequence is DFGHSKILGETSLMRTLCGTPTYLAPE. Position 379 is a phosphoserine; by autocatalysis (S379). Residues T383 and T387 each carry the phosphothreonine; by autocatalysis modification. The residue at position 456 (S456) is a Phosphoserine. Positions 506-517 are enriched in polar residues; it reads TALPQVLAQPST. Positions 506 to 538 are disordered; sequence TALPQVLAQPSTSRKRPREGEAEGAETTKRPAV. Positions 523-534 are enriched in basic and acidic residues; the sequence is REGEAEGAETTK.

The protein belongs to the protein kinase superfamily. CAMK Ser/Thr protein kinase family. CHK2 subfamily. In terms of assembly, homodimer. Homodimerization is part of the activation process but the dimer may dissociate following activation. Interacts with PML. Interacts with TP53. Interacts with RB1; phosphorylates RB1. Interacts with BRCA1. Interacts (phosphorylated at Thr-68) with MDC1; requires ATM-mediated phosphorylation of CHEK2. Interacts with TP53BP1; modulates CHEK2 phosphorylation at Thr-68 in response to ionizing radiation. Interacts with CDC25A; phosphorylates CDC25A and mediates its degradation in response to ionizing radiation. Interacts with CUL1; mediates CHEK2 ubiquitination and regulation. Interacts with CDKN2AIP. Interacts (via protein kinase domain) with CCAR2 (via N-terminus). Interacts with SIRT1. Requires Mg(2+) as cofactor. In terms of processing, phosphorylated. Phosphorylated at Ser-73 by PLK3 in response to DNA damage, promoting phosphorylation at Thr-68 by ATM and the G2/M transition checkpoint. Phosphorylation at Thr-68 induces homodimerization. Autophosphorylates at Thr-383 and Thr-387 in the T-loop/activation segment upon dimerization to become fully active and phosphorylate its substrates like for instance CDC25C. DNA damage-induced autophosphorylation at Ser-379 induces CUL1-mediated ubiquitination and regulates the pro-apoptotic function. Phosphorylation at Ser-456 also regulates ubiquitination. Phosphorylated by PLK4. Post-translationally, ubiquitinated. CUL1-mediated ubiquitination regulates the pro-apoptotic function. Ubiquitination may also regulate protein stability. Ubiquitinated by RNF8 via 'Lys-48'-linked ubiquitination. In terms of tissue distribution, high expression is found in testis, spleen, colon and peripheral blood leukocytes. Low expression is found in other tissues.

Its subcellular location is the nucleus. It is found in the PML body. It localises to the nucleoplasm. It catalyses the reaction L-seryl-[protein] + ATP = O-phospho-L-seryl-[protein] + ADP + H(+). The catalysed reaction is L-threonyl-[protein] + ATP = O-phospho-L-threonyl-[protein] + ADP + H(+). With respect to regulation, activated through phosphorylation at Thr-68 by ATM in response to DNA double-strand breaks. Activation is modulated by several mediators including MDC1 and TP53BP1. Induces homodimerization with exchange of the T-loop/activation segment between protomers and transphosphorylation of the protomers. The autophosphorylated kinase dimer is fully active. Negatively regulated by PPM1D through dephosphorylation of Thr-68. Functionally, serine/threonine-protein kinase which is required for checkpoint-mediated cell cycle arrest, activation of DNA repair and apoptosis in response to the presence of DNA double-strand breaks. May also negatively regulate cell cycle progression during unperturbed cell cycles. Following activation, phosphorylates numerous effectors preferentially at the consensus sequence [L-X-R-X-X-S/T]. Regulates cell cycle checkpoint arrest through phosphorylation of CDC25A, CDC25B and CDC25C, inhibiting their activity. Inhibition of CDC25 phosphatase activity leads to increased inhibitory tyrosine phosphorylation of CDK-cyclin complexes and blocks cell cycle progression. May also phosphorylate NEK6 which is involved in G2/M cell cycle arrest. Regulates DNA repair through phosphorylation of BRCA2, enhancing the association of RAD51 with chromatin which promotes DNA repair by homologous recombination. Also stimulates the transcription of genes involved in DNA repair (including BRCA2) through the phosphorylation and activation of the transcription factor FOXM1. Regulates apoptosis through the phosphorylation of p53/TP53, MDM4 and PML. Phosphorylation of p53/TP53 at 'Ser-20' by CHEK2 may alleviate inhibition by MDM2, leading to accumulation of active p53/TP53. Phosphorylation of MDM4 may also reduce degradation of p53/TP53. Also controls the transcription of pro-apoptotic genes through phosphorylation of the transcription factor E2F1. Tumor suppressor, it may also have a DNA damage-independent function in mitotic spindle assembly by phosphorylating BRCA1. Its absence may be a cause of the chromosomal instability observed in some cancer cells. Promotes the CCAR2-SIRT1 association and is required for CCAR2-mediated SIRT1 inhibition. Under oxidative stress, promotes ATG7 ubiquitination by phosphorylating the E3 ubiquitin ligase TRIM32 at 'Ser-55' leading to positive regulation of the autophagosme assembly. (Microbial infection) Phosphorylates herpes simplex virus 1/HHV-1 protein ICP0 and thus activates its SUMO-targeted ubiquitin ligase activity. The chain is Serine/threonine-protein kinase Chk2 from Homo sapiens (Human).